Here is a 38-residue protein sequence, read N- to C-terminus: Very early lactation protein (38 aa).

As to quaternary structure, homodimer. O-glycosylated. Contains sialic acid residues. In terms of tissue distribution, found in the whey fraction of milk (at protein level).

It localises to the secreted. The chain is Very early lactation protein from Trichosurus vulpecula (Brush-tailed possum).